Here is an 803-residue protein sequence, read N- to C-terminus: Leucine--tRNA ligase (803 aa).

The short motif at 40-51 (PYPSGAGLHVGH) is the 'HIGH' region element. A 'KMSKS' region motif is present at residues 575 to 579 (KMSKS). Residue Lys578 participates in ATP binding.

It belongs to the class-I aminoacyl-tRNA synthetase family.

The protein localises to the cytoplasm. It carries out the reaction tRNA(Leu) + L-leucine + ATP = L-leucyl-tRNA(Leu) + AMP + diphosphate. The protein is Leucine--tRNA ligase of Listeria welshimeri serovar 6b (strain ATCC 35897 / DSM 20650 / CCUG 15529 / CIP 8149 / NCTC 11857 / SLCC 5334 / V8).